The following is a 182-amino-acid chain: Keratin, high-sulfur matrix protein, B2D (182 aa).

6 consecutive repeat copies span residues 27 to 36 (PTCCQTSCCQ), 37 to 46 (PTSIQTSCCQ), 47 to 56 (PTSIQTSCCQ), 57 to 66 (PTSIQTSCCQ), 67 to 76 (PISIQTSCCQ), and 77 to 86 (PTCLQTSGCE). Residues 27-86 (PTCCQTSCCQPTSIQTSCCQPTSIQTSCCQPTSIQTSCCQPISIQTSCCQPTCLQTSGCE) form a 6 X 10 AA tandem repeats region.

In terms of biological role, the keratin products of mammalian epidermal derivatives such as wool and hair consist of microfibrils embedded in a rigid matrix of other proteins. The matrix proteins include the high-sulfur and high-tyrosine keratins, having molecular weights of 6-20 kDa, whereas the microfibrils contain the larger, low-sulfur keratins (40-56 kDa). This is Keratin, high-sulfur matrix protein, B2D from Ovis aries (Sheep).